Consider the following 461-residue polypeptide: SWM histone demethylase complex subunit phf1 (461 aa).

The interval 79–130 (PYGGMTMPASSSSGATSVPPEQDPSLSVSFNRLPKSASTKTKNGRIRSSRRE) is disordered. Residues 102 to 119 (PSLSVSFNRLPKSASTKT) show a composition bias toward polar residues. The PHD-type zinc-finger motif lies at 190–246 (VTLCSVCQRGHSPLSNRIVFCDGCNSPYHQLCHHPPIDDATVQDVDAEWFCMKCQYR).

Component of the SWM histone demethylase complex composed of at least lsd1, lsd2, phf1 and phf2.

The protein resides in the nucleus. Component of the SWM histone demethylase complex that specifically demethylates H3K9me2, a specific tag for epigenetic transcriptional activation, thereby acting as a corepressor. Has a role in regulating heterochromatin propagation and euchromatic transcription. This chain is SWM histone demethylase complex subunit phf1 (phf1), found in Schizosaccharomyces pombe (strain 972 / ATCC 24843) (Fission yeast).